A 1653-amino-acid chain; its full sequence is Protein TOPAZ1 (1653 aa).

Disordered regions lie at residues 1–94 (MRPP…TDLV), 284–303 (YSVE…KSGK), and 415–442 (ISST…SETE). Residues 63–78 (GREETEGDKLAKENGK) show a composition bias toward basic and acidic residues. The span at 423 to 442 (SDGHHMEKRSPRGDLRSETE) shows a compositional bias: basic and acidic residues.

Restricted to testis, where it localizes to germ cells.

The protein resides in the cytoplasm. It localises to the cytosol. In terms of biological role, important for normal spermatogenesis and male fertility. Specifically required for progression to the post-meiotic stages of spermatocyte development. Seems to be necessary for normal expression levels of a number of testis-expressed gene transcripts, although its role in this process is unclear. The chain is Protein TOPAZ1 from Mus musculus (Mouse).